The primary structure comprises 325 residues: uncharacterized protein (325 aa).

Positions 1–75 (MSQPPEHPGN…PPPGYPTHLQ (75 aa)) are disordered. Over residues 24-70 (YPPPGYGAPPPPPGYGPPPGTYLPPGYNAPPPPPGYGPPPGPPPPGY) the composition is skewed to pro residues. 4 helical membrane-spanning segments follow: residues 96 to 116 (AVTLVVPVLAYAVALAAVIGA), 153 to 173 (IVMFLGYIALFALVLYMHAGI), 205 to 225 (LLIVALTFIGGLLCVIPGLIF), and 273 to 293 (LVGELLCFVGMLIGIPVAALI).

It to M.tuberculosis Rv2560.

The protein localises to the cell membrane. This is an uncharacterized protein from Mycobacterium bovis (strain ATCC BAA-935 / AF2122/97).